Reading from the N-terminus, the 155-residue chain is Deoxyuridine 5'-triphosphate nucleotidohydrolase (155 aa).

Residues 75–77, asparagine 88, and 92–94 contribute to the substrate site; these read RSG and TVD.

Belongs to the dUTPase family. The cofactor is Mg(2+).

The catalysed reaction is dUTP + H2O = dUMP + diphosphate + H(+). It participates in pyrimidine metabolism; dUMP biosynthesis; dUMP from dCTP (dUTP route): step 2/2. This enzyme is involved in nucleotide metabolism: it produces dUMP, the immediate precursor of thymidine nucleotides and it decreases the intracellular concentration of dUTP so that uracil cannot be incorporated into DNA. The chain is Deoxyuridine 5'-triphosphate nucleotidohydrolase from Caulobacter vibrioides (strain ATCC 19089 / CIP 103742 / CB 15) (Caulobacter crescentus).